Here is an 889-residue protein sequence, read N- to C-terminus: F-BAR domain only protein 1 (889 aa).

The F-BAR domain occupies 1–248; that stretch reads MSYFGEHFWG…NIENVSVEML (248 aa). The segment at 1–275 is mediates membrane-binding; that stretch reads MSYFGEHFWG…LDFEAYSAAA (275 aa). A coiled-coil region spans residues 156–195; sequence TSQKEMDKAETKTKKAAESLRRSVEKYNSARADFEQKMLD. Residues 267 to 442 are mediates interaction with the adaptor protein complex AP-2; that stretch reads DFEAYSAAAL…KNLFGPPLES (176 aa). The disordered stretch occupies residues 294-352; the sequence is LSRREREPEPPAAVDFLEPDSGTCPEVDEEGFTVRPDVTQNSTAEPSRFSSSDSDFDDE. A phosphoserine mark is found at Ser-295, Ser-347, and Ser-372. The disordered stretch occupies residues 382–596; that stretch reads ATAGSLILPP…SPLGSSAAST (215 aa). Residues 450-469 show a composition bias toward low complexity; that stretch reads TGSSSLGFTSSPSPFSSSSP. Over residues 496–511 the composition is skewed to pro residues; it reads PGTPQSPPSCRAPPPE. Position 530 is a phosphoserine (Ser-530). Residues 580 to 596 are compositionally biased toward low complexity; the sequence is LSRSLSPSPLGSSAAST. The segment at 609 to 889 is mediates interaction with AGFG1, CALM, DAB2, EPS15, EPS15R, ITSN1 and clathrin; it reads HGVSRGPSPV…FATGMYLVSC (281 aa). Ser-616 is modified (phosphoserine). Residues 625-888 form the MHD domain; sequence ALPIATAFTE…RFATGMYLVS (264 aa). The tract at residues 826 to 849 is disordered; sequence AGGSGRLSASWEPLSGPSTPSPVA.

It belongs to the FCHO family. May oligomerize and form homotetramer. Interacts with AP2A2 and AP2B1; 2 subunits of the adaptor protein complex AP-2. Interacts with DAB2. Interacts with clathrin (CLTC or CLTCL1). Interacts with EPS15, EPS15R and ITSN1. Interacts with AGFG1 and CALM. May interact with ACVR1; linking this receptor to clathrin-mediated endocytosis. As to expression, predominantly expressed in lymphoid cells.

It is found in the membrane. It localises to the clathrin-coated pit. Its function is as follows. Functions in an early step of clathrin-mediated endocytosis. Has both a membrane binding/bending activity and the ability to recruit proteins essential to the formation of functional clathrin-coated pits. May regulate Bmp signaling by regulating clathrin-mediated endocytosis of Bmp receptors. Involved in the regulation of T-cell poliferation and activation. Affects TCR clustering upon receptor triggering and modulates its internalisation, playing a role in TCR-dependent T-cell activation. In Homo sapiens (Human), this protein is F-BAR domain only protein 1.